Consider the following 521-residue polypeptide: Glutamate--cysteine ligase (521 aa).

This sequence belongs to the glutamate--cysteine ligase type 1 family. Type 1 subfamily.

It catalyses the reaction L-cysteine + L-glutamate + ATP = gamma-L-glutamyl-L-cysteine + ADP + phosphate + H(+). Its pathway is sulfur metabolism; glutathione biosynthesis; glutathione from L-cysteine and L-glutamate: step 1/2. The chain is Glutamate--cysteine ligase from Aliivibrio fischeri (strain MJ11) (Vibrio fischeri).